We begin with the raw amino-acid sequence, 118 residues long: Cell division protein FtsB (118 aa).

The Cytoplasmic segment spans residues 1–6 (MRNWRW). A helical membrane pass occupies residues 7–24 (LLLVLAALLAWLQHRFWF). The Periplasmic segment spans residues 25–118 (GPGNSGEVRM…DLSQPRREKR (94 aa)). The stretch at 30 to 66 (GEVRMLQVQIVQQHQENERLRQRNASLAAEVKNLKDG) forms a coiled coil. Positions 98 to 118 (LPNDTSADHGVDLSQPRREKR) are disordered. A compositionally biased stretch (basic and acidic residues) spans 103–118 (SADHGVDLSQPRREKR).

Belongs to the FtsB family. In terms of assembly, part of a complex composed of FtsB, FtsL and FtsQ.

Its subcellular location is the cell inner membrane. In terms of biological role, essential cell division protein. May link together the upstream cell division proteins, which are predominantly cytoplasmic, with the downstream cell division proteins, which are predominantly periplasmic. In Xylella fastidiosa (strain M12), this protein is Cell division protein FtsB.